A 461-amino-acid polypeptide reads, in one-letter code: Transcription factor SOX-10 (461 aa).

5 disordered regions span residues 1–60 (MADD…ADDD), 154–191 (LRMQ…GEAG), 205–268 (LDHR…DFGN), 350–369 (KAQV…DQPS), and 433–461 (AISD…LSRP). Residues 30–42 (ASDNSSHLASSGN) are compositionally biased toward polar residues. Residues 56–96 (EADDDKFPVCIREAVSQVLSGYDWTLVPMPVRVNGSNKSKP) form a dimerization (DIM) region. Residues 98–166 (VKRPMNAFMV…QHKKDHPDYK (69 aa)) constitute a DNA-binding region (HMG box). Residues 154–167 (LRMQHKKDHPDYKY) are compositionally biased toward basic and acidic residues. Residues 181-191 (EGEGQVEGEAG) are compositionally biased toward gly residues. The segment at 221-306 (PEHSSGQSHG…NGHAGHPGHV (86 aa)) is transactivation domain (TAM). The span at 247 to 264 (ADSKREGRSLGEGGKPHI) shows a compositional bias: basic and acidic residues. Residues 350–461 (KAQVKTEGSA…QPVYTTLSRP (112 aa)) form a transactivation domain (TAC) region. The span at 441–461 (VPQSHSPTHWEQPVYTTLSRP) shows a compositional bias: polar residues.

It is found in the cytoplasm. The protein localises to the nucleus. Its function is as follows. Transcription factor that plays a central role in developing and mature glia. Specifically activates expression of myelin genes, during oligodendrocyte (OL) maturation, thereby playing a central role in oligodendrocyte maturation and CNS myelination. This Gallus gallus (Chicken) protein is Transcription factor SOX-10 (SOX10).